The chain runs to 317 residues: tRNA pseudouridine synthase B (317 aa).

Catalysis depends on Asp47, which acts as the Nucleophile.

Belongs to the pseudouridine synthase TruB family. Type 1 subfamily.

It carries out the reaction uridine(55) in tRNA = pseudouridine(55) in tRNA. Responsible for synthesis of pseudouridine from uracil-55 in the psi GC loop of transfer RNAs. This Shewanella sp. (strain MR-4) protein is tRNA pseudouridine synthase B.